Consider the following 539-residue polypeptide: O-phosphoserine--tRNA(Cys) ligase (539 aa).

Substrate contacts are provided by residues 188-190 (HMT), 233-235 (SAS), 275-276 (YY), and Asn-327.

The protein belongs to the class-II aminoacyl-tRNA synthetase family. O-phosphoseryl-tRNA(Cys) synthetase subfamily. Homotetramer. Interacts with SepCysS.

It carries out the reaction tRNA(Cys) + O-phospho-L-serine + ATP = O-phospho-L-seryl-tRNA(Cys) + AMP + diphosphate. In terms of biological role, catalyzes the attachment of O-phosphoserine (Sep) to tRNA(Cys). This chain is O-phosphoserine--tRNA(Cys) ligase, found in Methanosarcina acetivorans (strain ATCC 35395 / DSM 2834 / JCM 12185 / C2A).